The primary structure comprises 165 residues: 3-hydroxyacyl-[acyl-carrier-protein] dehydratase FERN, mitochondrial (165 aa).

The N-terminal 35 residues, 1–35 (MLMKRLFSSSHVFSSSSASSNLLKIGSVLKQARTF), are a transit peptide targeting the mitochondrion. One can recognise a MaoC-like domain in the interval 36–124 (ADDDVLGYSK…AVSIRQIKNK (89 aa)).

Homodimer.

The protein localises to the mitochondrion. The enzyme catalyses a (3R)-hydroxyacyl-[ACP] = a (2E)-enoyl-[ACP] + H2O. The protein operates within lipid metabolism; fatty acid biosynthesis. In terms of biological role, 3-hydroxyl-[acyl-carrier-protein] (3-hydroxyl-ACP) dehydratase required for mitochondrial fatty acid synthesis (mtFAS). Essential for photorespiration, tomato morphogenesis and plant development, probably by influencing mitochondrial membrane lipid composition and other lipid metabolic pathways, and by contributing to energy supply and reactive oxygen species (ROS) homeostasis. This is 3-hydroxyacyl-[acyl-carrier-protein] dehydratase FERN, mitochondrial from Solanum lycopersicum (Tomato).